The sequence spans 562 residues: Protein FAM83D-A (562 aa).

The disordered stretch occupies residues 424 to 471 (ITTQTTETSQCTTQTPAPTSSVARLSNSSNSSSSSFSSTSITSTGSNC). The span at 425–471 (TTQTTETSQCTTQTPAPTSSVARLSNSSNSSSSSFSSTSITSTGSNC) shows a compositional bias: low complexity.

Belongs to the FAM83 family.

It localises to the cytoplasm. The protein resides in the cytoskeleton. Its subcellular location is the spindle. It is found in the spindle pole. May regulate cell proliferation, growth, migration and epithelial to mesenchymal transition. May also be important for proper chromosome congression and alignment during mitosis. In Xenopus laevis (African clawed frog), this protein is Protein FAM83D-A.